The chain runs to 106 residues: MMKVLVVFALLVTLISYSSSEGIDDLEADELLSLMANEQTRAKACTPRYYDCSHDRHSCCRSSMFKDVCTCFYPEGGDNKEVCTCQQPKHLKYMEKATDKIKNLFG.

The N-terminal stretch at 1–20 (MMKVLVVFALLVTLISYSSS) is a signal peptide. A propeptide spanning residues 21-41 (EGIDDLEADELLSLMANEQTR) is cleaved from the precursor. Cystine bridges form between cysteine 45–cysteine 60, cysteine 52–cysteine 69, cysteine 59–cysteine 85, and cysteine 71–cysteine 83.

This sequence belongs to the neurotoxin 19 (CSTX) family. 02 (D7) subfamily. Expressed by the venom gland.

It localises to the secreted. This chain is Toxin-like structure LSTX-D7, found in Lycosa singoriensis (Wolf spider).